The sequence spans 921 residues: Probable dipeptidyl-aminopeptidase B (921 aa).

Disordered regions lie at residues 1-33 (MAGHPEENAQLLSTEQESMSRNSSDSVASTAST) and 45-66 (VAANGSEKPTMVTPKFPPRGER). The Cytoplasmic portion of the chain corresponds to 1–109 (MAGHPEENAQ…NKSVDKKLRR (109 aa)). Polar residues predominate over residues 10 to 22 (QLLSTEQESMSRN). The segment covering 23 to 33 (SSDSVASTAST) has biased composition (low complexity). The helical; Signal-anchor for type II membrane protein transmembrane segment at 110–130 (LIWIIGGVFIGAWVLALFIFL) threads the bilayer. The Vacuolar segment spans residues 131–921 (GKQAYKHSSE…VPLEIDAAKV (791 aa)). Positions 138 to 157 (SSESPHDPQATSSRGSGKKV) are disordered. A glycan (N-linked (GlcNAc...) asparagine) is linked at Asn362. The active-site Charge relay system is the Ser768. N-linked (GlcNAc...) asparagine glycosylation occurs at Asn822. Active-site charge relay system residues include Asp845 and His878.

This sequence belongs to the peptidase S9B family.

It is found in the vacuole membrane. The enzyme catalyses Release of an N-terminal dipeptide, Xaa-Yaa-|-Zaa-, from a polypeptide, preferentially when Yaa is Pro, provided Zaa is neither Pro nor hydroxyproline.. Functionally, type IV dipeptidyl-peptidase which removes N-terminal dipeptides sequentially from polypeptides having unsubstituted N-termini provided that the penultimate residue is proline. The polypeptide is Probable dipeptidyl-aminopeptidase B (dapB) (Botryotinia fuckeliana (strain B05.10) (Noble rot fungus)).